The sequence spans 555 residues: Probable metabolite transport protein YDR387C (555 aa).

The Cytoplasmic portion of the chain corresponds to 1 to 39 (MSTDESEDVYSDLYSIISQVTSNTANDIEQLPYALTFKT). Residues 40–60 (SLIFVGATIGGLLFGYDTGVI) form a helical membrane-spanning segment. Topologically, residues 61–83 (SGVLLSLKPEDLSLVVLTDVQKE) are extracellular. The chain crosses the membrane as a helical span at residues 84–104 (LITSSTSVGSFFGSILAFPLA). Residues 105–118 (DRYGRRITLAICCS) lie on the Cytoplasmic side of the membrane. A helical transmembrane segment spans residues 119–139 (IFILAAIGMAIARTLTFLICG). Arginine 140 is a topological domain (extracellular). The chain crosses the membrane as a helical span at residues 141 to 161 (LLVGIAVGVSAQCVPLFLSEI). The Cytoplasmic portion of the chain corresponds to 162–168 (SPSRIRG). The chain crosses the membrane as a helical span at residues 169–189 (FMLTLNIIAITGGQLVSYVIA). Residues 190–200 (SLMKEIDNSWR) are Extracellular-facing. Residues 201 to 221 (YLFALSAIPAILFLSILDFIP) traverse the membrane as a helical segment. Residues 222–356 (ESPRWSISKG…TIRALIVGCM (135 aa)) lie on the Cytoplasmic side of the membrane. The tract at residues 289 to 313 (SSTSGTLSPPNIKRLSSNTERTSNT) is disordered. The helical transmembrane segment at 357-377 (LMFFQQITGFNAFMYYAAIIF) threads the bilayer. The Extracellular segment spans residues 378-384 (SKFNIKN). Residues 385–405 (PLLPPILIASTNFIFTFFAMY) form a helical membrane-spanning segment. Residues 406-413 (TMDSLGRR) lie on the Cytoplasmic side of the membrane. Residues 414–434 (AILLRTILIMTVGLLLCSVGF) form a helical membrane-spanning segment. Over 435–440 (GHDQVN) the chain is Extracellular. Residues 441–461 (LLLISVVIYVAAYASAMGSVP) form a helical membrane-spanning segment. At 462–474 (WTCVEFLPLNRRS) the chain is on the cytoplasmic side. The chain crosses the membrane as a helical span at residues 475-497 (FGASCIACTNWLTNAFVSMTYLS). At 498-506 (TINTIGDEN) the chain is on the extracellular side. Residues 507 to 527 (TMLIFAFFTVCAWFFVYFWYP) traverse the membrane as a helical segment. The Cytoplasmic segment spans residues 528–555 (EVKGLSLEEVGRVFDNGIDVHYVFRTYH).

It belongs to the major facilitator superfamily. Sugar transporter (TC 2.A.1.1) family.

It is found in the membrane. The sequence is that of Probable metabolite transport protein YDR387C from Saccharomyces cerevisiae (strain ATCC 204508 / S288c) (Baker's yeast).